We begin with the raw amino-acid sequence, 346 residues long: Phosphoribosylformylglycinamidine cyclo-ligase (346 aa).

It belongs to the AIR synthase family.

It is found in the cytoplasm. The enzyme catalyses 2-formamido-N(1)-(5-O-phospho-beta-D-ribosyl)acetamidine + ATP = 5-amino-1-(5-phospho-beta-D-ribosyl)imidazole + ADP + phosphate + H(+). The protein operates within purine metabolism; IMP biosynthesis via de novo pathway; 5-amino-1-(5-phospho-D-ribosyl)imidazole from N(2)-formyl-N(1)-(5-phospho-D-ribosyl)glycinamide: step 2/2. This Erwinia tasmaniensis (strain DSM 17950 / CFBP 7177 / CIP 109463 / NCPPB 4357 / Et1/99) protein is Phosphoribosylformylglycinamidine cyclo-ligase.